The chain runs to 522 residues: Circadian clock oscillator protein KaiC (522 aa).

2 KaiC domains span residues 1–248 (MKKS…INIF) and 262–522 (ARVS…DDLL). Residues Gly-50, Thr-51, Gly-52, Lys-53, Thr-54, Ser-90, Lys-225, Leu-226, Arg-227, Thr-229, His-231, Thr-241, Asp-242, Thr-291, Gly-292, Thr-293, Gly-294, Lys-295, Thr-296, and Leu-297 each coordinate ATP. Thr-54 contributes to the Mg(2+) binding site. Thr-296 is a binding site for Mg(2+). Glu-319 provides a ligand contact to Mg(2+). Trp-332 is a binding site for ATP. At Ser-432 the chain carries Phosphoserine; by autocatalysis. Residue Thr-433 is modified to Phosphothreonine; by autocatalysis. Residues Arg-452, Lys-458, Met-459, Arg-460, Ser-462, His-464, and Lys-466 each contribute to the ATP site.

It belongs to the KaiC family. As to quaternary structure, homohexamer; hexamerization is dependent on ATP-binding. The KaiABC complex composition changes during the circadian cycle to control KaiC phosphorylation. Complexes KaiC(6), KaiA(2-4):KaiC(6), KaiB(6):KaiC(6) and KaiC(6):KaiB(6):KaiA(12) are among the most important forms, many form cooperatively. KaiC interacts with SasA, activating its autokinase function and leading to RpaA activation. It depends on Mg(2+) as a cofactor. Post-translationally, phosphorylated on serine and threonine residues by autocatalysis. Has a 4 step phosphorylation cycle; the autokinase acts first on Thr-433, then Ser-432. When Ser-432 is modified KaiC switches to an autophosphatase mode, acting first on phospho-Thr-433 then phospho-Ser-432.

The catalysed reaction is L-seryl-[protein] + ATP = O-phospho-L-seryl-[protein] + ADP + H(+). It catalyses the reaction L-threonyl-[protein] + ATP = O-phospho-L-threonyl-[protein] + ADP + H(+). It carries out the reaction ATP + H2O = ADP + phosphate + H(+). With respect to regulation, the interaction with KaiA enhances its phosphorylation status, while the interaction with KaiB decreases it. Its function is as follows. Central component of the KaiABC oscillator complex, which constitutes the main circadian regulator in cyanobacteria. Complex composition changes during the circadian cycle to control KaiC phosphorylation. KaiA stimulates KaiC autophosphorylation, while KaiB sequesters KaiA, leading to KaiC autodephosphorylation. Clock output pathways impact the RpaA transcriptional regulator. KaiC enhances the autophosphorylation activity of SasA, which then transfers its phosphate group to RpaA to activate it. KaiB and KaiC together enhance the phospho-RpaA dephosphatase activity of CikA. Has a weak, temperature-independent ATPase activity; ATPase activity defines the circadian period. The phosphorylation state of KaiC modulates its ATPase activity and effects KaiB binding. The chain is Circadian clock oscillator protein KaiC from Acaryochloris marina (strain MBIC 11017).